Reading from the N-terminus, the 273-residue chain is Large ribosomal subunit protein uL2 (273 aa).

The disordered stretch occupies residues 224-263 (AMNPVDHPHGGGEGRNFGKHPVTPWGLQTKGKKTRKNKRT). The segment covering 253–263 (KGKKTRKNKRT) has biased composition (basic residues).

It belongs to the universal ribosomal protein uL2 family. Part of the 50S ribosomal subunit. Forms a bridge to the 30S subunit in the 70S ribosome.

Functionally, one of the primary rRNA binding proteins. Required for association of the 30S and 50S subunits to form the 70S ribosome, for tRNA binding and peptide bond formation. It has been suggested to have peptidyltransferase activity; this is somewhat controversial. Makes several contacts with the 16S rRNA in the 70S ribosome. This chain is Large ribosomal subunit protein uL2, found in Buchnera aphidicola subsp. Schizaphis graminum (strain Sg).